We begin with the raw amino-acid sequence, 174 residues long: MLNQLAIAEVGNPMLGNIIVVSGSFLILMFLLKHFAWGPISDILKKREDKIANDLDSAEKSRINSAKMEQEREQQLLASRSDAADIIKNAKESGELSRQNILKETQEEVARLKSKAQTDIMLERDTALNSVKDDVADLSLQIAAKILNKELSPEMHESLINQYIEGLGSSNETR.

The chain crosses the membrane as a helical span at residues 18 to 38; the sequence is IIVVSGSFLILMFLLKHFAWG.

This sequence belongs to the ATPase B chain family. As to quaternary structure, F-type ATPases have 2 components, F(1) - the catalytic core - and F(0) - the membrane proton channel. F(1) has five subunits: alpha(3), beta(3), gamma(1), delta(1), epsilon(1). F(0) has three main subunits: a(1), b(2) and c(10-14). The alpha and beta chains form an alternating ring which encloses part of the gamma chain. F(1) is attached to F(0) by a central stalk formed by the gamma and epsilon chains, while a peripheral stalk is formed by the delta and b chains.

The protein resides in the cell membrane. Functionally, f(1)F(0) ATP synthase produces ATP from ADP in the presence of a proton or sodium gradient. F-type ATPases consist of two structural domains, F(1) containing the extramembraneous catalytic core and F(0) containing the membrane proton channel, linked together by a central stalk and a peripheral stalk. During catalysis, ATP synthesis in the catalytic domain of F(1) is coupled via a rotary mechanism of the central stalk subunits to proton translocation. In terms of biological role, component of the F(0) channel, it forms part of the peripheral stalk, linking F(1) to F(0). The chain is ATP synthase subunit b from Enterococcus hirae (strain ATCC 9790 / DSM 20160 / JCM 8729 / LMG 6399 / NBRC 3181 / NCIMB 6459 / NCDO 1258 / NCTC 12367 / WDCM 00089 / R).